The primary structure comprises 180 residues: Sec-independent protein translocase protein TatB (180 aa).

The helical transmembrane segment at 1-21 threads the bilayer; the sequence is MFDIGWSELLVIGVVALIAIG. Residues 77 to 180 are disordered; sequence TRGDLMTRLT…DQTARGAKAS (104 aa). Positions 105 to 129 are enriched in low complexity; that stretch reads ADKPSVSSDAASASGSAAPEAGAAE.

The protein belongs to the TatB family. As to quaternary structure, the Tat system comprises two distinct complexes: a TatABC complex, containing multiple copies of TatA, TatB and TatC subunits, and a separate TatA complex, containing only TatA subunits. Substrates initially bind to the TatABC complex, which probably triggers association of the separate TatA complex to form the active translocon.

The protein localises to the cell inner membrane. Functionally, part of the twin-arginine translocation (Tat) system that transports large folded proteins containing a characteristic twin-arginine motif in their signal peptide across membranes. Together with TatC, TatB is part of a receptor directly interacting with Tat signal peptides. TatB may form an oligomeric binding site that transiently accommodates folded Tat precursor proteins before their translocation. The polypeptide is Sec-independent protein translocase protein TatB (Nitrobacter winogradskyi (strain ATCC 25391 / DSM 10237 / CIP 104748 / NCIMB 11846 / Nb-255)).